The chain runs to 459 residues: UDP-N-acetylmuramoylalanine--D-glutamate ligase (459 aa).

An ATP-binding site is contributed by 119-125; sequence GTNGKTT.

It belongs to the MurCDEF family.

The protein resides in the cytoplasm. The catalysed reaction is UDP-N-acetyl-alpha-D-muramoyl-L-alanine + D-glutamate + ATP = UDP-N-acetyl-alpha-D-muramoyl-L-alanyl-D-glutamate + ADP + phosphate + H(+). Its pathway is cell wall biogenesis; peptidoglycan biosynthesis. Functionally, cell wall formation. Catalyzes the addition of glutamate to the nucleotide precursor UDP-N-acetylmuramoyl-L-alanine (UMA). In Lactiplantibacillus plantarum (strain ATCC BAA-793 / NCIMB 8826 / WCFS1) (Lactobacillus plantarum), this protein is UDP-N-acetylmuramoylalanine--D-glutamate ligase.